We begin with the raw amino-acid sequence, 414 residues long: Gamma-glutamyl phosphate reductase (414 aa).

The protein belongs to the gamma-glutamyl phosphate reductase family.

It localises to the cytoplasm. It catalyses the reaction L-glutamate 5-semialdehyde + phosphate + NADP(+) = L-glutamyl 5-phosphate + NADPH + H(+). It functions in the pathway amino-acid biosynthesis; L-proline biosynthesis; L-glutamate 5-semialdehyde from L-glutamate: step 2/2. Functionally, catalyzes the NADPH-dependent reduction of L-glutamate 5-phosphate into L-glutamate 5-semialdehyde and phosphate. The product spontaneously undergoes cyclization to form 1-pyrroline-5-carboxylate. The sequence is that of Gamma-glutamyl phosphate reductase from Xanthomonas campestris pv. campestris (strain ATCC 33913 / DSM 3586 / NCPPB 528 / LMG 568 / P 25).